The primary structure comprises 551 residues: Tetrachloroethene reductive dehalogenase (551 aa).

Positions 1-39 form a signal peptide, tat-type signal; it reads MGEINRRNFLKASMLGAAAAAVASASVVKGVVSPLVADA. The 4Fe-4S ferredoxin-type 1 domain occupies 411-440; that stretch reads PRKFGVREFCRLCKKCADACPAQAISHEKD. Residues cysteine 420, cysteine 423, cysteine 426, cysteine 430, cysteine 467, cysteine 478, cysteine 481, and cysteine 485 each coordinate [4Fe-4S] cluster. The 19-residue stretch at 478–496 folds into the 4Fe-4S ferredoxin-type 2 domain; the sequence is CSNCVAVCSWNKVETWNHD.

Belongs to the PceA family. [4Fe-4S] cluster is required as a cofactor. It depends on corrinoid as a cofactor. In terms of processing, predicted to be exported by the Tat system. The position of the signal peptide cleavage has been experimentally proven.

The protein resides in the cell membrane. It carries out the reaction trichloroethene + chloride + A + H(+) = tetrachloroethene + AH2. It catalyses the reaction trichloroethene + AH2 = (Z)-1,2-dichloroethene + chloride + A + H(+). Catalyzes the reductive dechlorination of tetrachloroethene (PCE) to trichloroethene (TCE) and of trichloroethene to cis-1,2-dichloroethene (DCE). Reduced methyl viologen can act as the artificial electron donor. This Desulfitobacterium hafniense (Desulfitobacterium frappieri) protein is Tetrachloroethene reductive dehalogenase.